Reading from the N-terminus, the 764-residue chain is 5-methyltetrahydropteroyltriglutamate--homocysteine methyltransferase (764 aa).

Residues 16 to 19 (RELK) and K115 each bind 5-methyltetrahydropteroyltri-L-glutamate. L-homocysteine is bound by residues 435–437 (IGS) and E488. L-methionine is bound by residues 435-437 (IGS) and E488. 5-methyltetrahydropteroyltri-L-glutamate is bound by residues 519–520 (RC) and W565. D603 is an L-homocysteine binding site. D603 is a binding site for L-methionine. E609 provides a ligand contact to 5-methyltetrahydropteroyltri-L-glutamate. Zn(2+)-binding residues include H645, C647, and E669. H698 acts as the Proton donor in catalysis. Position 730 (C730) interacts with Zn(2+).

It belongs to the vitamin-B12 independent methionine synthase family. It depends on Zn(2+) as a cofactor.

The enzyme catalyses 5-methyltetrahydropteroyltri-L-glutamate + L-homocysteine = tetrahydropteroyltri-L-glutamate + L-methionine. It functions in the pathway amino-acid biosynthesis; L-methionine biosynthesis via de novo pathway; L-methionine from L-homocysteine (MetE route): step 1/1. Catalyzes the transfer of a methyl group from 5-methyltetrahydrofolate to homocysteine resulting in methionine formation. This chain is 5-methyltetrahydropteroyltriglutamate--homocysteine methyltransferase, found in Burkholderia pseudomallei (strain 668).